Reading from the N-terminus, the 72-residue chain is Translation initiation factor IF-1 (72 aa).

The region spanning 1-72 (MPKEEVLEFP…TKGRITYRFK (72 aa)) is the S1-like domain.

The protein belongs to the IF-1 family. Component of the 30S ribosomal translation pre-initiation complex which assembles on the 30S ribosome in the order IF-2 and IF-3, IF-1 and N-formylmethionyl-tRNA(fMet); mRNA recruitment can occur at any time during PIC assembly.

The protein resides in the cytoplasm. In terms of biological role, one of the essential components for the initiation of protein synthesis. Stabilizes the binding of IF-2 and IF-3 on the 30S subunit to which N-formylmethionyl-tRNA(fMet) subsequently binds. Helps modulate mRNA selection, yielding the 30S pre-initiation complex (PIC). Upon addition of the 50S ribosomal subunit IF-1, IF-2 and IF-3 are released leaving the mature 70S translation initiation complex. This chain is Translation initiation factor IF-1, found in Chelativorans sp. (strain BNC1).